The following is a 522-amino-acid chain: 3-octaprenyl-4-hydroxybenzoate carboxy-lyase (522 aa).

Asparagine 181 is a Mn(2+) binding site. Residues 184–186, 198–200, and 203–204 contribute to the prenylated FMN site; these read IYR, RWL, and RG. Glutamate 247 provides a ligand contact to Mn(2+). Catalysis depends on aspartate 322, which acts as the Proton donor.

This sequence belongs to the UbiD family. As to quaternary structure, homohexamer. It depends on prenylated FMN as a cofactor. Mn(2+) is required as a cofactor.

The protein localises to the cell membrane. It carries out the reaction a 4-hydroxy-3-(all-trans-polyprenyl)benzoate + H(+) = a 2-(all-trans-polyprenyl)phenol + CO2. Its pathway is cofactor biosynthesis; ubiquinone biosynthesis. Its function is as follows. Catalyzes the decarboxylation of 3-octaprenyl-4-hydroxy benzoate to 2-octaprenylphenol, an intermediate step in ubiquinone biosynthesis. The protein is 3-octaprenyl-4-hydroxybenzoate carboxy-lyase of Paraburkholderia xenovorans (strain LB400).